Consider the following 386-residue polypeptide: 3-hydroxyisobutyryl-CoA hydrolase, mitochondrial (386 aa).

The N-terminal 32 residues, 1–32, are a transit peptide targeting the mitochondrion; the sequence is MGQREMWRLMSRFNAFKRTNTILHHLRMSKHT. N6-acetyllysine; alternate is present on residues K55 and K92. An N6-succinyllysine; alternate mark is found at K55 and K92. Residues E121, G146, E169, and D177 each contribute to the substrate site. K221 bears the N6-acetyllysine; alternate mark. The residue at position 221 (K221) is an N6-succinyllysine; alternate. The residue at position 234 (S234) is a Phosphoserine. Residue K257 is modified to N6-succinyllysine. At K297 the chain carries N6-acetyllysine; alternate. K297 carries the N6-succinyllysine; alternate modification. K301 is subject to N6-succinyllysine. K353 carries the N6-acetyllysine; alternate modification. K353 bears the N6-succinyllysine; alternate mark. At S356 the chain carries Phosphoserine. Residues K360 and K365 each carry the N6-acetyllysine modification. K377 is subject to N6-succinyllysine.

It belongs to the enoyl-CoA hydratase/isomerase family. In terms of tissue distribution, highly expressed in liver and kidney, also detected in heart, muscle and brain (at protein level). Not detected in lung.

Its subcellular location is the mitochondrion. It catalyses the reaction 3-hydroxy-2-methylpropanoyl-CoA + H2O = 3-hydroxy-2-methylpropanoate + CoA + H(+). It functions in the pathway amino-acid degradation; L-valine degradation. Its function is as follows. Hydrolyzes 3-hydroxyisobutyryl-CoA (HIBYL-CoA), a saline catabolite. Has high activity toward isobutyryl-CoA. Could be an isobutyryl-CoA dehydrogenase that functions in valine catabolism. Also hydrolyzes 3-hydroxypropanoyl-CoA. This is 3-hydroxyisobutyryl-CoA hydrolase, mitochondrial (HIBCH) from Homo sapiens (Human).